We begin with the raw amino-acid sequence, 106 residues long: Putative double-stranded DNA mimic protein VV1_3059 (106 aa).

Belongs to the putative dsDNA mimic protein family.

Its function is as follows. May act as a double-stranded DNA (dsDNA) mimic. Probably regulates the activity of a dsDNA-binding protein. The chain is Putative double-stranded DNA mimic protein VV1_3059 from Vibrio vulnificus (strain CMCP6).